The sequence spans 255 residues: tRNA pseudouridine synthase B (255 aa).

D52 serves as the catalytic Nucleophile. Substrate-binding residues include Y80, Y183, and L204.

It belongs to the pseudouridine synthase TruB family. Type 1 subfamily.

It catalyses the reaction uridine(55) in tRNA = pseudouridine(55) in tRNA. In terms of biological role, responsible for synthesis of pseudouridine from uracil-55 in the psi GC loop of transfer RNAs. The polypeptide is tRNA pseudouridine synthase B (Blochmanniella floridana).